The chain runs to 390 residues: Transcription factor bHLH76 (390 aa).

The segment at 147-217 (NVSEDSQSSG…SEKQPSDSLK (71 aa)) is disordered. Residues 207–217 (NSEKQPSDSLK) are compositionally biased toward basic and acidic residues. One can recognise a bHLH domain in the interval 229–279 (QATNSHSLAERVRREKISERMKFLQDLVPGCDKVTGKAVMLDEIINYVQSL).

In terms of assembly, homodimer. Interacts with IBH1. Binds reversibly to CRY2 after blue light illumination. In terms of tissue distribution, expressed constitutively in roots, leaves, stems, and flowers.

It localises to the nucleus. Functionally, transcriptional activator involved in cell elongation. Regulates the expression of a subset of genes involved in cell expansion by binding to the G-box motif. Binds to chromatin DNA of the FT gene and promotes its expression, and thus triggers flowering in response to blue light. The chain is Transcription factor bHLH76 (BHLH76) from Arabidopsis thaliana (Mouse-ear cress).